Reading from the N-terminus, the 236-residue chain is 2,3,4,5-tetrahydropyridine-2,6-dicarboxylate N-acetyltransferase (236 aa).

This sequence belongs to the transferase hexapeptide repeat family. DapH subfamily.

It carries out the reaction (S)-2,3,4,5-tetrahydrodipicolinate + acetyl-CoA + H2O = L-2-acetamido-6-oxoheptanedioate + CoA. Its pathway is amino-acid biosynthesis; L-lysine biosynthesis via DAP pathway; LL-2,6-diaminopimelate from (S)-tetrahydrodipicolinate (acetylase route): step 1/3. Its function is as follows. Catalyzes the transfer of an acetyl group from acetyl-CoA to tetrahydrodipicolinate. The sequence is that of 2,3,4,5-tetrahydropyridine-2,6-dicarboxylate N-acetyltransferase from Bacillus subtilis (strain 168).